The chain runs to 161 residues: MSLIPNFFGGRRNNVFDPFSLDVWDPFKDFPFPNTLSSASFPEFSRENSAFVSTRVDWKETPEAHVFKADIPGLKKEEVKVQIEDDKVLQISGERNVEKEDKNDTWHRVERSSGKFMRRFRLPENAKVEQVKASMENGVLTVTVPKEEVKKPDVKAIEISG.

The region spanning 47–161 (ENSAFVSTRV…PDVKAIEISG (115 aa)) is the sHSP domain.

The protein belongs to the small heat shock protein (HSP20) family. Forms oligomeric structures.

The protein resides in the cytoplasm. This Glycine max (Soybean) protein is 18.5 kDa class I heat shock protein (HSP18.5-C).